The sequence spans 602 residues: T-box transcription factor TBX15 (602 aa).

A disordered region spans residues 43-95 (SMEALSPAGPLGDTDDPATHGLEPHPDSEQSTGSDSEVLTERTSCSFSTHTDL). Over residues 71-94 (EQSTGSDSEVLTERTSCSFSTHTD) the composition is skewed to polar residues. Positions 122–304 (LWKRFHDIGT…RNPFAKGFRD (183 aa)) form a DNA-binding region, T-box. Threonine 330 is subject to Phosphothreonine. 2 disordered regions span residues 338 to 369 (QKQQGGSTGTSPTTSSTGTPSPSASSHLLSPS) and 425 to 444 (QSGTASATQPSETFMPQRTP). A compositionally biased stretch (low complexity) spans 346 to 369 (GTSPTTSSTGTPSPSASSHLLSPS).

Can form a heterodimer with TBX18.

It localises to the nucleus. Its function is as follows. Probable transcriptional regulator involved in the development of the skeleton of the limb, vertebral column and head. Acts by controlling the number of mesenchymal precursor cells and chondrocytes. In Mus musculus (Mouse), this protein is T-box transcription factor TBX15 (Tbx15).